We begin with the raw amino-acid sequence, 118 residues long: MARIAGINIPDHKHTVIALTSIFGIGKTRSQAICAATEIAENVKISELSEEQIDKLRDEVAKFVVEGDLRREVTLSIKRLMDLGTYRGLRHRRGLPVRGQRTKTNARTRKGPRKPIKK.

Residues 91 to 118 are disordered; it reads HRRGLPVRGQRTKTNARTRKGPRKPIKK.

This sequence belongs to the universal ribosomal protein uS13 family. In terms of assembly, part of the 30S ribosomal subunit. Forms a loose heterodimer with protein S19. Forms two bridges to the 50S subunit in the 70S ribosome.

Located at the top of the head of the 30S subunit, it contacts several helices of the 16S rRNA. In the 70S ribosome it contacts the 23S rRNA (bridge B1a) and protein L5 of the 50S subunit (bridge B1b), connecting the 2 subunits; these bridges are implicated in subunit movement. Contacts the tRNAs in the A and P-sites. The sequence is that of Small ribosomal subunit protein uS13 from Pectobacterium atrosepticum (strain SCRI 1043 / ATCC BAA-672) (Erwinia carotovora subsp. atroseptica).